We begin with the raw amino-acid sequence, 273 residues long: Zinc finger protein 32 (273 aa).

C2H2-type zinc fingers lie at residues 77–99, 105–127, and 133–155; these read YECQ…ERIH, FECT…QRIH, and YQCK…ERLH. Zn(2+) is bound by residues Cys-79, Cys-82, His-95, His-99, Cys-107, Cys-110, His-123, His-127, Ser-141, Gln-144, Gly-157, Tyr-161, Phe-198, Lys-201, Leu-214, Ala-218, Cys-247, Cys-250, His-263, and Cys-267. 2 C2H2-type zinc fingers span residues 161-183 and 189-211; these read YECA…RRVH and YRCD…IRVH. The C2H2-type 6 zinc finger occupies 217–239; that stretch reads YACTQCRKSFHTRGNCILHGKIH. Residues 245–267 form a CCHC-type zinc finger; it reads YLCGQCGKSFTQRGSLAVHQRSC.

The protein belongs to the krueppel C2H2-type zinc-finger protein family.

The protein localises to the nucleus. In terms of biological role, may be involved in transcriptional regulation. The polypeptide is Zinc finger protein 32 (ZNF32) (Homo sapiens (Human)).